Here is a 149-residue protein sequence, read N- to C-terminus: UPF0260 protein Pput_1301 (149 aa).

The protein belongs to the UPF0260 family.

In Pseudomonas putida (strain ATCC 700007 / DSM 6899 / JCM 31910 / BCRC 17059 / LMG 24140 / F1), this protein is UPF0260 protein Pput_1301.